The chain runs to 311 residues: Coproporphyrin III ferrochelatase 1 (311 aa).

Fe-coproporphyrin III-binding positions include Y12, R29, 45-46 (RY), S53, and Y124. Positions 182 and 263 each coordinate Fe(2+).

The protein belongs to the ferrochelatase family.

Its subcellular location is the cytoplasm. It carries out the reaction Fe-coproporphyrin III + 2 H(+) = coproporphyrin III + Fe(2+). It functions in the pathway porphyrin-containing compound metabolism; protoheme biosynthesis. Its function is as follows. Involved in coproporphyrin-dependent heme b biosynthesis. Catalyzes the insertion of ferrous iron into coproporphyrin III to form Fe-coproporphyrin III. The polypeptide is Coproporphyrin III ferrochelatase 1 (Bacillus thuringiensis subsp. konkukian (strain 97-27)).